The primary structure comprises 470 residues: MNSVAENFTDYVVADLALAGWGRKEIRIAETEMPGLMAIREEFAVVQPLKGARITGSLHMTIQTAVLIETLTALGAEVRWASCNIFSTQDHAAAAIAASGVPVFAVKGESLADYWDYTHRIFEWRDGGYSNMILDDGGDATLLLHLGARAEKDVSVLAKPGSEEERVLFAAIRAKLASDPTWYSVRLAAIRGVTEETTTGVHRLYQMFERGELKFPAINVNDSVTKSKFDNLYGCRESLVDGIKRATDVMVAGKVAVVCGYGDVGKGSAQALRALSAQVWVTEIDPICALQAAMEGYRVVTMDYAAEHADIFVTCTGNYHVIRHDHMARMKDQAIVCNIGHFDNEIDVASIEGYEWEEIKPQVDHVIFPDGKRIILLAKGRLVNLGCATGHPSYVMSSSFANQTIAQIELFTRTADYPVGVYTLPKHLDEKVARLQLKKLNAQLTELRPDQAAYIGVPVEGPYKSAHYRY.

Thr61, Asp136, and Glu196 together coordinate substrate. NAD(+) is bound at residue 197–199 (TTT). Substrate-binding residues include Lys226 and Asp230. Residues Asn231, 260 to 265 (GYGDVG), Glu283, Asn318, 339 to 341 (IGH), and Asn384 each bind NAD(+).

It belongs to the adenosylhomocysteinase family. The cofactor is NAD(+).

The protein localises to the cytoplasm. It catalyses the reaction S-adenosyl-L-homocysteine + H2O = L-homocysteine + adenosine. The protein operates within amino-acid biosynthesis; L-homocysteine biosynthesis; L-homocysteine from S-adenosyl-L-homocysteine: step 1/1. In terms of biological role, may play a key role in the regulation of the intracellular concentration of adenosylhomocysteine. In Aromatoleum aromaticum (strain DSM 19018 / LMG 30748 / EbN1) (Azoarcus sp. (strain EbN1)), this protein is Adenosylhomocysteinase.